The chain runs to 123 residues: Small ribosomal subunit protein uS12 (123 aa).

A 3-methylthioaspartic acid modification is found at aspartate 89.

This sequence belongs to the universal ribosomal protein uS12 family. Part of the 30S ribosomal subunit. Contacts proteins S8 and S17. May interact with IF1 in the 30S initiation complex.

With S4 and S5 plays an important role in translational accuracy. Its function is as follows. Interacts with and stabilizes bases of the 16S rRNA that are involved in tRNA selection in the A site and with the mRNA backbone. Located at the interface of the 30S and 50S subunits, it traverses the body of the 30S subunit contacting proteins on the other side and probably holding the rRNA structure together. The combined cluster of proteins S8, S12 and S17 appears to hold together the shoulder and platform of the 30S subunit. This Caulobacter vibrioides (strain ATCC 19089 / CIP 103742 / CB 15) (Caulobacter crescentus) protein is Small ribosomal subunit protein uS12.